The primary structure comprises 226 residues: Reticulon-like protein B16 (226 aa).

Positions 41 to 224 constitute a Reticulon domain; that stretch reads AADLLLWRRR…RLSWSLSKDK (184 aa). 3 helical membrane passes run 54 to 74, 75 to 95, and 149 to 169; these read LGVIIISTVAWLIFEFSGLPF, LSVSSDVLLIVIMISFVHARV, and VVICLWLLSAIGSYISLCTLL.

It is found in the endoplasmic reticulum membrane. This chain is Reticulon-like protein B16 (RTNLB16), found in Arabidopsis thaliana (Mouse-ear cress).